A 248-amino-acid polypeptide reads, in one-letter code: Probable transcriptional regulatory protein PLES_43501 (248 aa).

It belongs to the TACO1 family.

Its subcellular location is the cytoplasm. The protein is Probable transcriptional regulatory protein PLES_43501 of Pseudomonas aeruginosa (strain LESB58).